A 529-amino-acid polypeptide reads, in one-letter code: Listeriolysin O (529 aa).

The first 24 residues, 1-24 (MKKIMLVFITLILVSLPIAQQTEA), serve as a signal peptide directing secretion. The next 4 membrane-spanning stretches (beta stranded) occupy residues 214–227 (ESQLIAKFGTAFKA), 234–243 (VNFGAISEGK), 312–321 (STKVKAAFDA), and 329–341 (SGDVELTNIIKNS). The short motif at 483 to 493 (ECTGLAWEWWR) is the Conserved undecapeptide element. The Cholesterol binding signature appears at 515–516 (TL).

Belongs to the cholesterol-dependent cytolysin family. As to quaternary structure, homooligomeric pore complex of 35 to 50 subunits; when inserted in the host membrane.

Its subcellular location is the secreted. It localises to the host membrane. It is found in the host cell membrane. Activity of listeriolysin O is regulated on multiple levels. It should be high in the phagosome, thereby allowing escape of the bacteria from the phagosomal compartment. Then, once inside the host cytosol, the activity must be controlled to prevent lysis of the host plasma membrane and loss of the intracellular environment. Functionally, a cholesterol-dependent toxin that causes cytolysis by forming pores in cholesterol containing host membranes. After binding to target membranes, the protein undergoes a major conformation change, leading to its insertion in the host membrane and formation of an oligomeric pore complex. Cholesterol is required for binding to host membranes, membrane insertion and pore formation; cholesterol binding is mediated by a Thr-Leu pair in the C-terminus. Acts as a major virulence factor required for the escape of bacteria from phagosomal vacuoles and entry into the host cytosol. Can be reversibly inactivated by oxidation. The chain is Listeriolysin O (hly) from Listeria monocytogenes serotype 4b (strain CLIP80459).